The primary structure comprises 450 residues: tRNA modification GTPase MnmE (450 aa).

(6S)-5-formyl-5,6,7,8-tetrahydrofolate contacts are provided by Arg-23, Glu-79, and Lys-118. The TrmE-type G domain maps to 214 to 374; sequence GITLILVGKP…LKEHILNKVG (161 aa). Asn-224 is a K(+) binding site. Residues 224–229, 243–249, and 268–271 each bind GTP; these read NAGKSS, TSIAGTT, and DTAG. Position 228 (Ser-228) interacts with Mg(2+). K(+)-binding residues include Thr-243, Ile-245, and Thr-248. Thr-249 contributes to the Mg(2+) binding site. Lys-450 serves as a coordination point for (6S)-5-formyl-5,6,7,8-tetrahydrofolate.

It belongs to the TRAFAC class TrmE-Era-EngA-EngB-Septin-like GTPase superfamily. TrmE GTPase family. As to quaternary structure, homodimer. Heterotetramer of two MnmE and two MnmG subunits. Requires K(+) as cofactor.

Its subcellular location is the cytoplasm. Functionally, exhibits a very high intrinsic GTPase hydrolysis rate. Involved in the addition of a carboxymethylaminomethyl (cmnm) group at the wobble position (U34) of certain tRNAs, forming tRNA-cmnm(5)s(2)U34. The polypeptide is tRNA modification GTPase MnmE (Francisella tularensis subsp. tularensis (strain WY96-3418)).